Consider the following 354-residue polypeptide: UDP-galactose transporter homolog 1 (354 aa).

5 consecutive transmembrane segments (helical) span residues 6 to 26, 54 to 74, 95 to 112, 123 to 143, and 148 to 168; these read GGSI…FLTW, LVIN…YSVV, FFKS…SSPL, LAYL…HFVL, and FPLY…IFTL. An N-linked (GlcNAc...) asparagine glycan is attached at Asn202. A run of 4 helical transmembrane segments spans residues 227-247, 268-288, 295-317, and 321-340; these read YLMC…ALIF, MNIL…FIIL, ILIT…LFGH, and GLQW…EALV.

Belongs to the nucleotide-sugar transporter family. SLC35B subfamily.

Its subcellular location is the endoplasmic reticulum membrane. In terms of biological role, may be involved in specific transport of UDP-Gal from the cytosol to the Golgi lumen. Involved in the maintenance of optimal conditions for the folding of secretory pathway proteins in the endoplasmic reticulum. The polypeptide is UDP-galactose transporter homolog 1 (HUT1) (Debaryomyces hansenii (strain ATCC 36239 / CBS 767 / BCRC 21394 / JCM 1990 / NBRC 0083 / IGC 2968) (Yeast)).